Here is a 64-residue protein sequence, read N- to C-terminus: Neuropeptide-like 4 (64 aa).

The first 18 residues, 1–18 (MFKLLVVVFAALFAAALA), serve as a signal peptide directing secretion. Propeptides lie at residues 19-40 (VPAP…EPAP) and 63-64 (YG).

It is found in the secreted. In Drosophila melanogaster (Fruit fly), this protein is Neuropeptide-like 4 (Nplp4).